We begin with the raw amino-acid sequence, 220 residues long: Octanoyltransferase (220 aa).

The region spanning 27–208 is the BPL/LPL catalytic domain; sequence PGTADEIWLC…QLARAHGHAV (182 aa). Substrate contacts are provided by residues 66–73, 139–141, and 152–154; these read RGGQVTYH, ALG, and GLA. Catalysis depends on cysteine 170, which acts as the Acyl-thioester intermediate.

This sequence belongs to the LipB family.

Its subcellular location is the cytoplasm. It carries out the reaction octanoyl-[ACP] + L-lysyl-[protein] = N(6)-octanoyl-L-lysyl-[protein] + holo-[ACP] + H(+). It participates in protein modification; protein lipoylation via endogenous pathway; protein N(6)-(lipoyl)lysine from octanoyl-[acyl-carrier-protein]: step 1/2. In terms of biological role, catalyzes the transfer of endogenously produced octanoic acid from octanoyl-acyl-carrier-protein onto the lipoyl domains of lipoate-dependent enzymes. Lipoyl-ACP can also act as a substrate although octanoyl-ACP is likely to be the physiological substrate. The protein is Octanoyltransferase of Bordetella parapertussis (strain 12822 / ATCC BAA-587 / NCTC 13253).